The sequence spans 323 residues: Phosphoribosylaminoimidazole-succinocarboxamide synthase (323 aa).

It belongs to the SAICAR synthetase family.

It catalyses the reaction 5-amino-1-(5-phospho-D-ribosyl)imidazole-4-carboxylate + L-aspartate + ATP = (2S)-2-[5-amino-1-(5-phospho-beta-D-ribosyl)imidazole-4-carboxamido]succinate + ADP + phosphate + 2 H(+). It functions in the pathway purine metabolism; IMP biosynthesis via de novo pathway; 5-amino-1-(5-phospho-D-ribosyl)imidazole-4-carboxamide from 5-amino-1-(5-phospho-D-ribosyl)imidazole-4-carboxylate: step 1/2. The protein is Phosphoribosylaminoimidazole-succinocarboxamide synthase of Azobacteroides pseudotrichonymphae genomovar. CFP2.